Here is a 375-residue protein sequence, read N- to C-terminus: Killer cell immunoglobulin-like receptor 2DL5B (375 aa).

The N-terminal stretch at 1–21 (MSLMVVSMACVGFFLLQGAWT) is a signal peptide. Residues 22–238 (HEGGQDKPLL…PSSKTGIRRH (217 aa)) lie on the Extracellular side of the membrane. Ig-like C2-type domains follow at residues 42-102 (GGHV…HPRS) and 137-200 (GENV…LHDS). 2 disulfide bridges follow: Cys49-Cys95 and Cys144-Cys193. A disordered region spans residues 213 to 233 (VSVTGNSSSSSSSPTEPSSKT). The N-linked (GlcNAc...) asparagine glycan is linked to Asn218. The span at 219–231 (SSSSSSSPTEPSS) shows a compositional bias: low complexity. A helical transmembrane segment spans residues 239 to 259 (LHILIGTSVAIILFIILFFFL). Over 260 to 375 (LHCCCSNKKN…ASSHVPAAGI (116 aa)) the chain is Cytoplasmic. The segment at 334–375 (AKPRSLSPAHKHHSQALRGSSRETTALSQNRVASSHVPAAGI) is disordered. Over residues 355-366 (RETTALSQNRVA) the composition is skewed to polar residues.

Belongs to the immunoglobulin superfamily.

Its subcellular location is the cell membrane. Functionally, receptor on natural killer (NK) cells for HLA-C alleles. Inhibits the activity of NK cells thus preventing cell lysis. This chain is Killer cell immunoglobulin-like receptor 2DL5B (KIR2DL5B), found in Homo sapiens (Human).